We begin with the raw amino-acid sequence, 218 residues long: Capsid protein (218 aa).

Position 1 is an N-acetylmethionine; by host (methionine 1). Low complexity predominate over residues 1–10 (MDKSESTSAG). Residues 1-30 (MDKSESTSAGRNRRRRLRRGSRSASSSSDA) are disordered. Over residues 11 to 21 (RNRRRRLRRGS) the composition is skewed to basic residues.

The protein belongs to the cucumovirus capsid protein family.

It localises to the virion. In terms of biological role, capsid protein. Probably binds RNA and plays a role in packaging. The polypeptide is Capsid protein (Cucumber mosaic virus (strain Y) (CMV)).